We begin with the raw amino-acid sequence, 60 residues long: MKNVLILGAGGQIARHVINQLADKQTIKQTLFARQPAKIHKPYPTNKMQTTSGKKVIQDR.

The tract at residues 40-60 (HKPYPTNKMQTTSGKKVIQDR) is disordered.

The sequence is that of Protein YmjC (ymjC) from Escherichia coli (strain K12).